Consider the following 430-residue polypeptide: Serine hydroxymethyltransferase 2 (430 aa).

(6S)-5,6,7,8-tetrahydrofolate-binding positions include Leu-128 and 132–134; that span reads GHL. Lys-237 carries the post-translational modification N6-(pyridoxal phosphate)lysine.

Belongs to the SHMT family. In terms of assembly, homodimer. It depends on pyridoxal 5'-phosphate as a cofactor.

The protein resides in the cytoplasm. It carries out the reaction (6R)-5,10-methylene-5,6,7,8-tetrahydrofolate + glycine + H2O = (6S)-5,6,7,8-tetrahydrofolate + L-serine. Its pathway is one-carbon metabolism; tetrahydrofolate interconversion. It participates in amino-acid biosynthesis; glycine biosynthesis; glycine from L-serine: step 1/1. Functionally, catalyzes the reversible interconversion of serine and glycine with tetrahydrofolate (THF) serving as the one-carbon carrier. This reaction serves as the major source of one-carbon groups required for the biosynthesis of purines, thymidylate, methionine, and other important biomolecules. Also exhibits THF-independent aldolase activity toward beta-hydroxyamino acids, producing glycine and aldehydes, via a retro-aldol mechanism. This Rhodospirillum rubrum (strain ATCC 11170 / ATH 1.1.1 / DSM 467 / LMG 4362 / NCIMB 8255 / S1) protein is Serine hydroxymethyltransferase 2.